The chain runs to 3432 residues: Genome polyprotein (3432 aa).

The interaction with host EXOC1 stretch occupies residues 2-15 (TKKPGGPGKNRAIN). Residues 2 to 109 (TKKPGGPGKN…RKQNKRGGNE (108 aa)) are Cytoplasmic-facing. Residues 37–72 (LLDGRGPVRFVLALITFFKFTALAPTKALLGRWKAV) are hydrophobic; homodimerization of capsid protein C. Positions 106–127 (GGNEGSIMWLASLAVVIACAGA) are cleaved as a propeptide — ER anchor for the capsid protein C, removed in mature form by serine protease NS3. Residues 110–130 (GSIMWLASLAVVIACAGAMKL) form a helical membrane-spanning segment. Residues 131–253 (SNFQGKLLMT…ATRYLMKTEN (123 aa)) are Extracellular-facing. Residue Asn142 is glycosylated (N-linked (GlcNAc...) asparagine; by host). The chain crosses the membrane as a helical span at residues 254-274 (WIIRNPGYAFLAAVLGWMLGS). Over 275 to 279 (NNGQR) the chain is Cytoplasmic. A helical transmembrane segment spans residues 280 to 294 (VVFTILLLLVAPAYS). Residues 295–746 (FNCLGMGNRD…QVFGGAFRTL (452 aa)) are Extracellular-facing. Disulfide bonds link Cys297-Cys324, Cys354-Cys410, Cys354-Cys415, Cys368-Cys399, Cys386-Cys410, and Cys386-Cys415. The fusion peptide stretch occupies residues 392-405 (DRGWGNGCGLFGKG). N-linked (GlcNAc...) asparagine; by host glycosylation is present at Asn448. Intrachain disulfides connect Cys484/Cys581 and Cys598/Cys629. Residues 747–767 (FGGMSWITQGLMGALLLWMGV) form a helical membrane-spanning segment. Topologically, residues 768–773 (NARDRS) are cytoplasmic. Residues 774 to 794 (IALAFLATGGVLVFLATNVHA) traverse the membrane as a helical segment. Residues 795–1219 (DTGCAIDITR…AFAEANSGGD (425 aa)) are Extracellular-facing. 6 cysteine pairs are disulfide-bonded: Cys798/Cys809, Cys849/Cys937, Cys973/Cys1017, Cys1074/Cys1123, Cys1085/Cys1106, and Cys1107/Cys1110. 2 N-linked (GlcNAc...) asparagine; by host glycosylation sites follow: Asn924 and Asn1001. A helical membrane pass occupies residues 1220 to 1240 (VLHLALIAVFKIQPAFLVMNM). At 1241 to 1250 (LSTRWTNQEN) the chain is on the cytoplasmic side. A helical transmembrane segment spans residues 1251-1271 (VVLVLGAAFFQLASVDLQIGV). Residue His1272 is a topological domain, lumenal. A helical membrane pass occupies residues 1273–1293 (GILNAAAIAWMIVRAITFPTT). Over 1294–1309 (SSVTMPVLALLTPGMR) the chain is Cytoplasmic. Residues 1310 to 1330 (ALYLDTYRIILLVIGICSLLH) traverse the membrane as a helical segment. Residues 1331-1341 (ERKKTMAKKKG) are Lumenal-facing. Residues 1342–1362 (AVLLGLALTSTGWFSPTTIAA) traverse the membrane as a helical segment. Residues 1363 to 1374 (GLMVCNPNKKRG) lie on the Cytoplasmic side of the membrane. Residues 1375–1395 (WPATEFLSAVGLMFAIVGGLA) form a helical membrane-spanning segment. Residues 1396 to 1398 (ELD) lie on the Lumenal side of the membrane. A helical membrane pass occupies residues 1399–1419 (IESMSIPFMLAGLMAVSYVVS). Topologically, residues 1420–1476 (GKATDMWLERAADISWEMDAAITGSSRRLDVKLDDDGDFHLIDDPGVPWKVWVLRMS) are cytoplasmic. Residues 1427–1466 (LERAADISWEMDAAITGSSRRLDVKLDDDGDFHLIDDPGV) are interacts with and activates NS3 protease. Positions 1477–1497 (CIGLAALTPWAIVPAAFGYWL) form an intramembrane region, helical. Over 1498–2173 (TLKTTKRGGV…RMALEELPDA (676 aa)) the chain is Cytoplasmic. Positions 1505–1682 (GGVFWDTPSP…DRQEEPVPEA (178 aa)) constitute a Peptidase S7 domain. Catalysis depends on charge relay system; for serine protease NS3 activity residues His1555, Asp1579, and Ser1639. In terms of domain architecture, Helicase ATP-binding spans 1685-1841 (PNMLRKRQMT…DSNAPIHDLQ (157 aa)). The interval 1689-1692 (RKRQ) is important for RNA-binding. 1698 to 1705 (LHPGSGKT) contacts ATP. A DEAH box motif is present at residues 1789–1792 (DEAH). The region spanning 1852 to 2017 (GYEWITEYAG…GLVAQLYGPE (166 aa)) is the Helicase C-terminal domain. Lys1893 carries the N6-acetyllysine; by host modification. The interval 1950–1972 (NPSPITSASAAQRRGRVGRNPNQ) is disordered. Residues 2168–2172 (EELPD) form a regulates the ATPase activity of NS3 helicase region. Residues 2174-2194 (LETITLIVAITVMTGGFFLLM) traverse the membrane as a helical segment. The Lumenal portion of the chain corresponds to 2195 to 2199 (MQRKG). Positions 2200–2220 (IGKMGLGALVLTLATFFLWAA) form an intramembrane region, helical. Residue Glu2221 is a topological domain, lumenal. Residues 2222–2242 (VPGTKIAGTLLIALLLMVVLI) form a helical membrane-spanning segment. The Cytoplasmic segment spans residues 2243–2257 (PEPEKQRSQTDNQLA). The chain crosses the membrane as a helical span at residues 2258 to 2278 (VFLICVLTVVGVVAANEYGML). Over 2279–2311 (EKTKADLKSMFGGKTQASGLTGLPSMALDLRPA) the chain is Lumenal. An intramembrane region (helical) is located at residues 2312-2332 (TAWALYGGSTVVLTPLLKHLI). Residues 2333–2368 (TSEYVTTSLASINSQAGSLFVLPRGVPFTDLDLTVG) lie on the Lumenal side of the membrane. Residues 2369–2389 (LVFLGCWGQITLTTFLTAMVL) form a helical membrane-spanning segment. The Cytoplasmic segment spans residues 2390 to 2444 (ATLHYGYMLPGWQAEALRAAQRRTAAGIMKNAVVDGMVATDVPELERTTPLMQKK). A helical transmembrane segment spans residues 2445–2465 (VGQVLLIGVSVAAFLVNPNVT). Topologically, residues 2466–2469 (TVRE) are lumenal. Residues 2470–2490 (AGVLVTAATLTLWDNGASAVW) traverse the membrane as a helical segment. Over 2491 to 3432 (NSTTATGLCH…DVLIQEDRVI (942 aa)) the chain is Cytoplasmic. An mRNA cap 0-1 NS5-type MT domain is found at 2528–2793 (GRPGGRTLGE…DVNLGSGTRA (266 aa)). Ser2583 is a binding site for S-adenosyl-L-methionine. Ser2583 is modified (phosphoserine). Lys2588 (for 2'-O-MTase activity) is an active-site residue. Positions 2613, 2614, 2631, 2632, 2658, and 2659 each coordinate S-adenosyl-L-methionine. Catalysis depends on Asp2673, which acts as the For 2'-O-MTase activity. An S-adenosyl-L-methionine-binding site is contributed by Ile2674. Active-site for 2'-O-MTase activity residues include Lys2709 and Glu2745. Tyr2747 is a binding site for S-adenosyl-L-methionine. Residues Glu2967, His2971, Cys2976, and Cys2979 each coordinate Zn(2+). Positions 3057 to 3209 (GKMYADDTAG…KPLDDRFATA (153 aa)) constitute a RdRp catalytic domain. The Zn(2+) site is built by His3244, Cys3260, and Cys3379.

The protein in the N-terminal section; belongs to the class I-like SAM-binding methyltransferase superfamily. mRNA cap 0-1 NS5-type methyltransferase family. Homodimer. Interacts (via N-terminus) with host EXOC1 (via C-terminus); this interaction results in EXOC1 degradation through the proteasome degradation pathway. In terms of assembly, forms heterodimers with envelope protein E in the endoplasmic reticulum and Golgi. As to quaternary structure, homodimer; in the endoplasmic reticulum and Golgi. Interacts with protein prM. Interacts with non-structural protein 1. Interacts with host HSPA5. Homodimer; Homohexamer when secreted. Interacts with envelope protein E. NS1 interacts with NS4B. Interacts with host complement protein CFH; this interaction leads to the degradation of C3. In terms of assembly, interacts (via N-terminus) with serine protease NS3. As to quaternary structure, forms a heterodimer with serine protease NS3. May form homooligomers. Forms a heterodimer with NS2B. Interacts with non-structural protein 2A (via N-terminus). Interacts with NS4B. Interacts with unphosphorylated RNA-directed RNA polymerase NS5; this interaction stimulates RNA-directed RNA polymerase NS5 guanylyltransferase activity. Interacts with host ILF2. In terms of assembly, interacts with serine protease NS3. As to quaternary structure, homodimer. Interacts with host STAT2; this interaction inhibits the phosphorylation of the latter, and, when all viral proteins are present (polyprotein), targets STAT2 for degradation. Interacts with serine protease NS3. The cofactor is Mn(2+). Mg(2+) serves as cofactor. Post-translationally, specific enzymatic cleavages in vivo yield mature proteins. Cleavages in the lumen of endoplasmic reticulum are performed by host signal peptidase, whereas cleavages in the cytoplasmic side are performed by serine protease NS3. Signal cleavage at the 2K-4B site requires a prior NS3 protease-mediated cleavage at the 4A-2K site. Cleaved in post-Golgi vesicles by a host furin, releasing the mature small envelope protein M, and peptide pr. This cleavage is incomplete as up to 30% of viral particles still carry uncleaved prM. In terms of processing, N-glycosylated. Post-translationally, N-glycosylated. The excreted form is glycosylated and this is required for efficient secretion of the protein from infected cells. Acetylated by host KAT5. Acetylation modulates NS3 RNA-binding and unwinding activities and plays an important positive role for viral replication. In terms of processing, phosphorylated on serines residues. This phosphorylation may trigger NS5 nuclear localization.

The protein resides in the virion. The protein localises to the host nucleus. It is found in the host cytoplasm. Its subcellular location is the host perinuclear region. It localises to the secreted. The protein resides in the virion membrane. The protein localises to the host endoplasmic reticulum membrane. It is found in the host cell surface. It carries out the reaction Selective hydrolysis of -Xaa-Xaa-|-Yaa- bonds in which each of the Xaa can be either Arg or Lys and Yaa can be either Ser or Ala.. The catalysed reaction is RNA(n) + a ribonucleoside 5'-triphosphate = RNA(n+1) + diphosphate. The enzyme catalyses a ribonucleoside 5'-triphosphate + H2O = a ribonucleoside 5'-diphosphate + phosphate + H(+). It catalyses the reaction ATP + H2O = ADP + phosphate + H(+). It carries out the reaction a 5'-end (5'-triphosphoguanosine)-ribonucleoside in mRNA + S-adenosyl-L-methionine = a 5'-end (N(7)-methyl 5'-triphosphoguanosine)-ribonucleoside in mRNA + S-adenosyl-L-homocysteine. The catalysed reaction is a 5'-end (N(7)-methyl 5'-triphosphoguanosine)-ribonucleoside in mRNA + S-adenosyl-L-methionine = a 5'-end (N(7)-methyl 5'-triphosphoguanosine)-(2'-O-methyl-ribonucleoside) in mRNA + S-adenosyl-L-homocysteine + H(+). Plays a role in virus budding by binding to the cell membrane and gathering the viral RNA into a nucleocapsid that forms the core of a mature virus particle. During virus entry, may induce genome penetration into the host cytoplasm after hemifusion induced by the surface proteins. Can migrate to the cell nucleus where it modulates host functions. Overcomes the anti-viral effects of host EXOC1 by sequestering and degrading the latter through the proteasome degradation pathway. In terms of biological role, inhibits RNA silencing by interfering with host Dicer. Its function is as follows. Prevents premature fusion activity of envelope proteins in trans-Golgi by binding to envelope protein E at pH6.0. After virion release in extracellular space, gets dissociated from E dimers. Functionally, acts as a chaperone for envelope protein E during intracellular virion assembly by masking and inactivating envelope protein E fusion peptide. prM is the only viral peptide matured by host furin in the trans-Golgi network probably to avoid catastrophic activation of the viral fusion activity in acidic Golgi compartment prior to virion release. prM-E cleavage is inefficient, and many virions are only partially matured. These uncleaved prM would play a role in immune evasion. May play a role in virus budding. Exerts cytotoxic effects by activating a mitochondrial apoptotic pathway through M ectodomain. May display a viroporin activity. In terms of biological role, binds to host cell surface receptor and mediates fusion between viral and cellular membranes. Efficient virus attachment to cell is, at least in part, mediated by host HSPA5. Envelope protein is synthesized in the endoplasmic reticulum in the form of heterodimer with protein prM. They play a role in virion budding in the ER, and the newly formed immature particle is covered with 60 spikes composed of heterodimer between precursor prM and envelope protein E. The virion is transported to the Golgi apparatus where the low pH causes dissociation of PrM-E heterodimers and formation of E homodimers. prM-E cleavage is inefficient, and many virions are only partially matured. These uncleaved prM would play a role in immune evasion. Its function is as follows. Involved in immune evasion, pathogenesis and viral replication. Once cleaved off the polyprotein, is targeted to three destinations: the viral replication cycle, the plasma membrane and the extracellular compartment. Essential for viral replication. Required for formation of the replication complex and recruitment of other non-structural proteins to the ER-derived membrane structures. Excreted as a hexameric lipoparticle that plays a role against host immune response. Antagonizing the complement function. Binds to the host macrophages and dendritic cells. Inhibits signal transduction originating from Toll-like receptor 3 (TLR3). Functionally, component of the viral RNA replication complex that functions in virion assembly and antagonizes the host alpha/beta interferon antiviral response. Required cofactor for the serine protease function of NS3. May have membrane-destabilizing activity and form viroporins. In terms of biological role, displays three enzymatic activities: serine protease, NTPase and RNA helicase. NS3 serine protease, in association with NS2B, performs its autocleavage and cleaves the polyprotein at dibasic sites in the cytoplasm: C-prM, NS2A-NS2B, NS2B-NS3, NS3-NS4A, NS4A-2K and NS4B-NS5. NS3 RNA helicase binds RNA and unwinds dsRNA in the 3' to 5' direction. Its function is as follows. Regulates the ATPase activity of the NS3 helicase activity. NS4A allows NS3 helicase to conserve energy during unwinding. Functionally, functions as a signal peptide for NS4B and is required for the interferon antagonism activity of the latter. Induces the formation of ER-derived membrane vesicles where the viral replication takes place. Inhibits interferon (IFN)-induced host STAT1 phosphorylation and nuclear translocation, thereby preventing the establishment of cellular antiviral state by blocking the IFN-alpha/beta pathway. Inhibits STAT2 translocation in the nucleus after IFN-alpha treatment. In terms of biological role, replicates the viral (+) and (-) RNA genome. Performs the capping of genomes in the cytoplasm. NS5 methylates viral RNA cap at guanine N-7 and ribose 2'-O positions. Besides its role in RNA genome replication, also prevents the establishment of cellular antiviral state by blocking the interferon-alpha/beta (IFN-alpha/beta) signaling pathway. Inhibits host TYK2 and STAT2 phosphorylation, thereby preventing activation of JAK-STAT signaling pathway. The polypeptide is Genome polyprotein (Ardeidae (herons)).